The following is a 310-amino-acid chain: Solute carrier family 25 member 47 (310 aa).

3 Solcar repeats span residues 1–80 (MDFV…CLAH), 93–208 (PTKA…LSEW), and 217–304 (PDVL…VLRL). Helical transmembrane passes span 3–23 (FVAGAIGGVCGVAVGYPLDTV), 49–69 (LWGFYRGLSLPVCTVSLVSSV), 98–116 (ITLSGCASGLVRVFLTSPT), 192–212 (GHSFATYFLSYAVLSEWLTPA), 219–239 (VLGVLVAGGCAGVLAWAVATP), and 275–295 (VLFKGLALNCCRAFPVNMVVF).

Belongs to the mitochondrial carrier (TC 2.A.29) family.

The protein resides in the mitochondrion inner membrane. It is found in the mitochondrion outer membrane. It catalyses the reaction NAD(+)(in) = NAD(+)(out). It carries out the reaction acetyl-CoA(in) = acetyl-CoA(out). In terms of biological role, mitochondrial NAD(+) transporter that acts as a 'metabolic gate' in hepatic lipogenesis. Provides NAD(+) substrate to mitochondrial SIRT3 deacetylase and enables its NAD(+)-dependent activities in mitochondrial energy metabolism. This triggers downstream activation of PRKAA1/AMPK-alpha signaling cascade that negatively regulates sterol regulatory element-binding protein (SREBP) transcriptional activities and ATP-consuming lipogenesis to restore cellular energy balance. May transport other mitochondrial metabolites having an aromatic nucleotide and phosphate groups, such as acetyl-CoA. Does not transport amino acids. The transport mechanism remains to be elucidated. The protein is Solute carrier family 25 member 47 of Rattus norvegicus (Rat).